The chain runs to 299 residues: Protease HtpX homolog (299 aa).

Transmembrane regions (helical) follow at residues 15–35 (ILLL…GYLF) and 39–59 (GLGG…SMIF). His143 lines the Zn(2+) pocket. The active site involves Glu144. A Zn(2+)-binding site is contributed by His147. 2 helical membrane-spanning segments follow: residues 158 to 178 (IAVA…RMMW) and 198 to 218 (IIML…ATLV). Zn(2+) is bound at residue Glu227.

Belongs to the peptidase M48B family. The cofactor is Zn(2+).

It is found in the cell membrane. In Streptococcus pneumoniae (strain Hungary19A-6), this protein is Protease HtpX homolog.